The following is a 97-amino-acid chain: HssA/B-like protein 27 (97 aa).

Belongs to the hssA/B family.

In Dictyostelium discoideum (Social amoeba), this protein is HssA/B-like protein 27 (hssl27).